Reading from the N-terminus, the 201-residue chain is NADH-quinone oxidoreductase subunit C (201 aa).

This sequence belongs to the complex I 30 kDa subunit family. As to quaternary structure, NDH-1 is composed of 14 different subunits. Subunits NuoB, C, D, E, F, and G constitute the peripheral sector of the complex.

The protein resides in the cell inner membrane. The enzyme catalyses a quinone + NADH + 5 H(+)(in) = a quinol + NAD(+) + 4 H(+)(out). Functionally, NDH-1 shuttles electrons from NADH, via FMN and iron-sulfur (Fe-S) centers, to quinones in the respiratory chain. The immediate electron acceptor for the enzyme in this species is believed to be ubiquinone. Couples the redox reaction to proton translocation (for every two electrons transferred, four hydrogen ions are translocated across the cytoplasmic membrane), and thus conserves the redox energy in a proton gradient. This is NADH-quinone oxidoreductase subunit C from Sinorhizobium medicae (strain WSM419) (Ensifer medicae).